A 249-amino-acid polypeptide reads, in one-letter code: Triosephosphate isomerase (249 aa).

Substrate is bound at residue 11–13 (NWK). The active-site Electrophile is the His-91. Glu-163 (proton acceptor) is an active-site residue. Substrate-binding positions include Gly-169, Ser-208, and 229–230 (GG).

This sequence belongs to the triosephosphate isomerase family. Homodimer.

The protein localises to the cytoplasm. It carries out the reaction D-glyceraldehyde 3-phosphate = dihydroxyacetone phosphate. The protein operates within carbohydrate biosynthesis; gluconeogenesis. Its pathway is carbohydrate degradation; glycolysis; D-glyceraldehyde 3-phosphate from glycerone phosphate: step 1/1. Its function is as follows. Involved in the gluconeogenesis. Catalyzes stereospecifically the conversion of dihydroxyacetone phosphate (DHAP) to D-glyceraldehyde-3-phosphate (G3P). This is Triosephosphate isomerase from Pseudoalteromonas translucida (strain TAC 125).